The chain runs to 339 residues: Fructose-1,6-bisphosphatase isozyme 2 (339 aa).

The segment at 3–10 (DRSPFETD) is important for interaction with ALDOA. AMP-binding positions include valine 18 and 28 to 32 (TGELT). Aspartate 69 and glutamate 98 together coordinate Mg(2+). 113-114 (KY) contributes to the AMP binding site. Mg(2+) is bound by residues aspartate 119, leucine 121, and aspartate 122. Position 122 (aspartate 122) interacts with substrate. Arginine 141 lines the AMP pocket. The short motif at 204-208 (KKKGK) is the Nuclear localization signal element. 213–216 (NEGY) is a binding site for substrate. Phosphotyrosine occurs at positions 216 and 219. Substrate-binding positions include 245-249 (YVGSM), tyrosine 265, and lysine 275. Glutamate 281 serves as a coordination point for Mg(2+).

The protein belongs to the FBPase class 1 family. In terms of assembly, homotetramer. Interacts with ALDOA; the interaction blocks inhibition by physiological concentrations of AMP and reduces inhibition by Ca(2+). Interacts with alpha-actinin and F-actin. Mg(2+) serves as cofactor. Expressed in muscle, intestine, brain and placenta and very weakly in liver.

The protein resides in the cell junction. The protein localises to the cytoplasm. It is found in the nucleus. Its subcellular location is the myofibril. It localises to the sarcomere. The protein resides in the z line. It catalyses the reaction beta-D-fructose 1,6-bisphosphate + H2O = beta-D-fructose 6-phosphate + phosphate. It functions in the pathway carbohydrate biosynthesis; gluconeogenesis. Its activity is regulated as follows. Subject to complex allosteric regulation. The enzyme can assume an active R-state, or an inactive T-state. Intermediate conformations may exist. AMP acts as an allosteric inhibitor. Fructose 2,6-bisphosphate acts as a competitive inhibitor. Strongly inhibited by Ca(2+). Functionally, catalyzes the hydrolysis of fructose 1,6-bisphosphate to fructose 6-phosphate in the presence of divalent cations and probably participates in glycogen synthesis from carbohydrate precursors, such as lactate. This is Fructose-1,6-bisphosphatase isozyme 2 (Fbp2) from Mus musculus (Mouse).